The chain runs to 541 residues: MNCRELPLTLWVLISVSTAESCTSRPHITVVEGEPFYLKHCSCSLAHEIETTTKSWYKSSGSQEHVELNPRSSSRIALHDCVLEFWPVELNDTGSYFFQMKNYTQKWKLNVIRRNKHSCFTERQVTSKIVEVKKFFQITCENSYYQTLVNSTSLYKNCKKLLLENNKNPTIKKNAEFEDQGYYSCVHFLHHNGKLFNITKTFNITIVEDRSNIVPVLLGPKLNHVAVELGKNVRLNCSALLNEEDVIYWMFGEENGSDPNIHEEKEMRIMTPEGKWHASKVLRIENIGESNLNVLYNCTVASTGGTDTKSFILVRKADMADIPGHVFTRGMIIAVLILVAVVCLVTVCVIYRVDLVLFYRHLTRRDETLTDGKTYDAFVSYLKECRPENGEEHTFAVEILPRVLEKHFGYKLCIFERDVVPGGAVVDEIHSLIEKSRRLIIVLSKSYMSNEVRYELESGLHEALVERKIKIILIEFTPVTDFTFLPQSLKLLKSHRVLKWKADKSLSYNSRFWKNLLYLMPAKTVKPGRDEPEVLPVLSES.

The first 18 residues, 1 to 18, serve as a signal peptide directing secretion; that stretch reads MNCRELPLTLWVLISVST. Disulfide bonds link cysteine 22–cysteine 41 and cysteine 43–cysteine 81. The Extracellular segment spans residues 22 to 329; it reads CTSRPHITVV…ADIPGHVFTR (308 aa). Ig-like C2-type domains follow at residues 33–121, 133–212, and 220–312; these read GEPF…SCFT, KKFF…DRSN, and PKLN…KSFI. 8 N-linked (GlcNAc...) asparagine glycosylation sites follow: asparagine 91, asparagine 102, asparagine 150, asparagine 197, asparagine 203, asparagine 236, asparagine 255, and asparagine 297. Disulfide bonds link cysteine 119–cysteine 158 and cysteine 140–cysteine 185. A disulfide bond links cysteine 237 and cysteine 298. Residues 330–350 form a helical membrane-spanning segment; that stretch reads GMIIAVLILVAVVCLVTVCVI. Residues 351-541 are Cytoplasmic-facing; the sequence is YRVDLVLFYR…PEVLPVLSES (191 aa). In terms of domain architecture, TIR spans 373–520; that stretch reads KTYDAFVSYL…RFWKNLLYLM (148 aa). Residue glutamate 455 is part of the active site.

This sequence belongs to the interleukin-1 receptor family. Forms a ternary complex with IL18 and IL18RAP. Within this complex, IL18R1 is involved in ligand-binding and IL18RAP in signaling leading to NF-kappa-B and JNK activation. Interacts with SLC12A3 in peritoneal macrophages; this interaction is increased by IL18 treatment. Post-translationally, N-glycosylated. N-linked glycosyl chains contribute to ligand recognition and intra-receptor interactions required for formation of an active ternary receptor complex. In terms of tissue distribution, highly expressed in leukocytes, spleen, lung. Also expressed, but at lower levels, in liver, small intestine, colon, prostate, thymus, placenta, and heart. Specifically coexpressed with IL18R1 in Th1 cells.

It is found in the membrane. It carries out the reaction NAD(+) + H2O = ADP-D-ribose + nicotinamide + H(+). In terms of biological role, within the IL18 receptor complex, responsible for the binding of the pro-inflammatory cytokine IL18, but not IL1A nor IL1B. Involved in IL18-mediated IFNG synthesis from T-helper 1 (Th1) cells. Contributes to IL18-induced cytokine production, either independently of SLC12A3, or as a complex with SLC12A3. This Homo sapiens (Human) protein is Interleukin-18 receptor 1.